A 115-amino-acid chain; its full sequence is Large ribosomal subunit protein bL19 (115 aa).

The protein belongs to the bacterial ribosomal protein bL19 family.

This protein is located at the 30S-50S ribosomal subunit interface and may play a role in the structure and function of the aminoacyl-tRNA binding site. This chain is Large ribosomal subunit protein bL19, found in Klebsiella pneumoniae (strain 342).